Reading from the N-terminus, the 231-residue chain is Cutinase 2 (231 aa).

The N-terminal stretch at 1–16 (MKFFALTTLLAATASA) is a signal peptide. A disulfide bridge connects residues Cys-48 and Cys-126. The active-site Nucleophile is Ser-137. An intrachain disulfide couples Cys-188 to Cys-195. Asp-192 is an active-site residue. Residue His-205 is the Proton donor/acceptor of the active site.

Belongs to the cutinase family. The 2 disulfide bonds play a critical role in holding the catalytic residues in juxta-position; reduction of the disulfide bridges results in the complete inactivation of the enzyme.

The protein resides in the secreted. It carries out the reaction cutin + H2O = cutin monomers.. Its function is as follows. Catalyzes the hydrolysis of complex carboxylic polyesters found in the cell wall of plants. Degrades cutin, a macromolecule that forms the structure of the plant cuticle. Allows pathogenic fungi to penetrate through the cuticular barrier into the host plant during the initial stage of fungal infection. This is Cutinase 2 (CUT2) from Fusarium vanettenii (Neocosmospora pisi).